The chain runs to 218 residues: Riboflavin kinase (218 aa).

Positions 1–27 are disordered; that stretch reads MRPDGPRDPVAGPDSGPEPPYPVRLSG. Mg(2+) contacts are provided by Thr44 and Asn46. Glu120 (nucleophile) is an active-site residue.

Belongs to the flavokinase family. It depends on Zn(2+) as a cofactor. Mg(2+) is required as a cofactor.

The catalysed reaction is riboflavin + ATP = FMN + ADP + H(+). It participates in cofactor biosynthesis; FMN biosynthesis; FMN from riboflavin (ATP route): step 1/1. Its function is as follows. Catalyzes the phosphorylation of riboflavin (vitamin B2) to form flavin mononucleotide (FMN) coenzyme. The protein is Riboflavin kinase (fmn1) of Neosartorya fischeri (strain ATCC 1020 / DSM 3700 / CBS 544.65 / FGSC A1164 / JCM 1740 / NRRL 181 / WB 181) (Aspergillus fischerianus).